Here is a 140-residue protein sequence, read N- to C-terminus: Granulocyte-macrophage colony-stimulating factor (140 aa).

An N-terminal signal peptide occupies residues 1–17 (MWLQNLLLLGTVVCSIC). O-linked (GalNAc...) serine glycosylation is present at S24. O-linked (GalNAc...) threonine glycosylation is present at T27. N-linked (GlcNAc...) asparagine glycans are attached at residues N45, N55, and N87. 2 disulfides stabilise this stretch: C72–C114 and C106–C139.

It belongs to the GM-CSF family. In terms of assembly, monomer. The signaling GM-CSF receptor complex is a dodecamer of two head-to-head hexamers of two alpha, two beta, and two ligand subunits.

It is found in the secreted. In terms of biological role, cytokine that stimulates the growth and differentiation of hematopoietic precursor cells from various lineages, including granulocytes, macrophages, eosinophils and erythrocytes. This Cavia porcellus (Guinea pig) protein is Granulocyte-macrophage colony-stimulating factor (CSF2).